The primary structure comprises 417 residues: Gamma-glutamyl phosphate reductase (417 aa).

It belongs to the gamma-glutamyl phosphate reductase family.

The protein resides in the cytoplasm. It catalyses the reaction L-glutamate 5-semialdehyde + phosphate + NADP(+) = L-glutamyl 5-phosphate + NADPH + H(+). Its pathway is amino-acid biosynthesis; L-proline biosynthesis; L-glutamate 5-semialdehyde from L-glutamate: step 2/2. Catalyzes the NADPH-dependent reduction of L-glutamate 5-phosphate into L-glutamate 5-semialdehyde and phosphate. The product spontaneously undergoes cyclization to form 1-pyrroline-5-carboxylate. The polypeptide is Gamma-glutamyl phosphate reductase (Idiomarina loihiensis (strain ATCC BAA-735 / DSM 15497 / L2-TR)).